A 624-amino-acid chain; its full sequence is DNA mismatch repair protein MutL (624 aa).

Residues 336–357 (GEGFHETSDSFSSRSSQHSDAR) form a disordered region. Low complexity predominate over residues 344–353 (DSFSSRSSQH).

Belongs to the DNA mismatch repair MutL/HexB family.

In terms of biological role, this protein is involved in the repair of mismatches in DNA. It is required for dam-dependent methyl-directed DNA mismatch repair. May act as a 'molecular matchmaker', a protein that promotes the formation of a stable complex between two or more DNA-binding proteins in an ATP-dependent manner without itself being part of a final effector complex. In Chlorobium phaeobacteroides (strain BS1), this protein is DNA mismatch repair protein MutL.